Reading from the N-terminus, the 298-residue chain is Protein RKD2 (298 aa).

Basic and acidic residues-rich tracts occupy residues 1 to 10 and 81 to 102; these read MADHTTKEQK and EQNR…VKET. Disordered stretches follow at residues 1-22 and 73-112; these read MADH…PSFD and SSAS…NERH. In terms of domain architecture, RWP-RK spans 121-203; the sequence is SDITTYTTSS…KMEGEENAEK (83 aa). The stretch at 188 to 222 forms a coiled coil; it reads NVKELQKMEGEENAEKLQDALEMLEKEKRTIEDLP. The tract at residues 241-279 is disordered; the sequence is NHKRKKKRSLKSDQSQVPSCSSSGSVPSDESVDEAGMES. Over residues 252-269 the composition is skewed to low complexity; that stretch reads SDQSQVPSCSSSGSVPSD. The span at 270 to 279 shows a compositional bias: acidic residues; the sequence is ESVDEAGMES.

The protein resides in the nucleus. Putative transcription factor. The sequence is that of Protein RKD2 (RKD2) from Arabidopsis thaliana (Mouse-ear cress).